The sequence spans 545 residues: CTP synthase (545 aa).

The tract at residues 1–266 (MKTKFIFITG…DQKIAIMLKL (266 aa)) is amidoligase domain. Ser-14 is a CTP binding site. Ser-14 lines the UTP pocket. ATP-binding positions include 15 to 20 (SLGKGL) and Asp-72. Asp-72 and Glu-140 together coordinate Mg(2+). CTP-binding positions include 147–149 (DIE), 187–192 (KTKPTQ), and Lys-223. UTP is bound by residues 187-192 (KTKPTQ) and Lys-223. Positions 291 to 545 (TIGIVGKYVD…IKASCENKNK (255 aa)) constitute a Glutamine amidotransferase type-1 domain. Residue Gly-353 participates in L-glutamine binding. Cys-380 acts as the Nucleophile; for glutamine hydrolysis in catalysis. Residues 381 to 384 (LGMQ), Glu-404, and Arg-472 contribute to the L-glutamine site. Catalysis depends on residues His-518 and Glu-520.

It belongs to the CTP synthase family. As to quaternary structure, homotetramer.

The enzyme catalyses UTP + L-glutamine + ATP + H2O = CTP + L-glutamate + ADP + phosphate + 2 H(+). The catalysed reaction is L-glutamine + H2O = L-glutamate + NH4(+). It catalyses the reaction UTP + NH4(+) + ATP = CTP + ADP + phosphate + 2 H(+). Its pathway is pyrimidine metabolism; CTP biosynthesis via de novo pathway; CTP from UDP: step 2/2. Allosterically activated by GTP, when glutamine is the substrate; GTP has no effect on the reaction when ammonia is the substrate. The allosteric effector GTP functions by stabilizing the protein conformation that binds the tetrahedral intermediate(s) formed during glutamine hydrolysis. Inhibited by the product CTP, via allosteric rather than competitive inhibition. Functionally, catalyzes the ATP-dependent amination of UTP to CTP with either L-glutamine or ammonia as the source of nitrogen. Regulates intracellular CTP levels through interactions with the four ribonucleotide triphosphates. This Maridesulfovibrio salexigens (strain ATCC 14822 / DSM 2638 / NCIMB 8403 / VKM B-1763) (Desulfovibrio salexigens) protein is CTP synthase.